Here is a 129-residue protein sequence, read N- to C-terminus: MCPECFFLMLFFCGYRACYCSSSFSSSSSSSSFRSSPAYGFSGRPPGGAGCRERSQRSCLRPGGLPSLTRNPGLQRPFRSRSLCRAVACAPGIPAKGRRDVRGNAVSQTALHVVAAGPCSLPAGCHTPV.

An N-terminal signal peptide occupies residues 1-17 (MCPECFFLMLFFCGYRA). Residues 26–36 (SSSSSSSFRSS) are compositionally biased toward low complexity. A disordered region spans residues 26-76 (SSSSSSSFRSSPAYGFSGRPPGGAGCRERSQRSCLRPGGLPSLTRNPGLQR).

This is an uncharacterized protein from Escherichia coli O157:H7.